The sequence spans 103 residues: Cell division protein FtsB (103 aa).

Residues 1 to 3 (MGK) are Cytoplasmic-facing. Residues 4-21 (LTLLLLALLVWLQYSLWF) traverse the membrane as a helical segment. Topologically, residues 22 to 103 (GKNGIHDYSR…RAQTAGQNNR (82 aa)) are periplasmic. Residues 33–62 (NDDVVAQQATNAKLKARNDQLFAEIDDLNG) are a coiled coil.

Belongs to the FtsB family. As to quaternary structure, part of a complex composed of FtsB, FtsL and FtsQ.

It localises to the cell inner membrane. Essential cell division protein. May link together the upstream cell division proteins, which are predominantly cytoplasmic, with the downstream cell division proteins, which are predominantly periplasmic. The sequence is that of Cell division protein FtsB from Salmonella arizonae (strain ATCC BAA-731 / CDC346-86 / RSK2980).